Here is a 98-residue protein sequence, read N- to C-terminus: MIGERIYKVLLGPHISEKATIVAEGNGQYVFRVTGDATKPEIKQAIEALFEVKVESVRTLNHKGKTKRTVRGLGKRKDVKKAYVRLAEGQDIDFMVAE.

It belongs to the universal ribosomal protein uL23 family. As to quaternary structure, part of the 50S ribosomal subunit. Contacts protein L29, and trigger factor when it is bound to the ribosome.

One of the early assembly proteins it binds 23S rRNA. One of the proteins that surrounds the polypeptide exit tunnel on the outside of the ribosome. Forms the main docking site for trigger factor binding to the ribosome. The sequence is that of Large ribosomal subunit protein uL23 from Marinomonas sp. (strain MWYL1).